A 395-amino-acid polypeptide reads, in one-letter code: MQNLVILGATGSIGKSTLDVIKRNPERYRAFALVAATSVERMRDLCIEHRPRYAHMVDESAAKRLADALPTGLGIEVSSGDEALLGLVTAAEVDTVMAAIVGAAGLLPTLAAVRAGKRVLLANKEALVMSGELFMEETKKSGAQLLPVDSEHNAIFQCLPEQVQREIGHCDLSAAGISHILLTGSGGPFLTSPLDTLATMTPAQACKHPNWSMGPKISVDSATMMNKGLEFIEARWLFNTARDELKVVIHPQSVIHSMVQYRDGSVLAQMGNPDMRTPIAHAMAYPQRISAGVEPLDFFKVGHLSFCEPDYSRFPCLKLAMDACHQGQEATTVLNAANEVAVAAFLDGRIGFTDIAVINGECLGKIAKTHLDSLDAILALDWEARRLANQLISRV.

Thr-10, Gly-11, Ser-12, Ile-13, Ala-36, and Asn-123 together coordinate NADPH. Position 124 (Lys-124) interacts with 1-deoxy-D-xylulose 5-phosphate. An NADPH-binding site is contributed by Glu-125. Asp-149 contacts Mn(2+). Residues Ser-150, Glu-151, Ser-185, and His-208 each coordinate 1-deoxy-D-xylulose 5-phosphate. Glu-151 is a Mn(2+) binding site. Gly-214 is a binding site for NADPH. Residues Ser-221, Asn-226, Lys-227, and Glu-230 each contribute to the 1-deoxy-D-xylulose 5-phosphate site. A Mn(2+)-binding site is contributed by Glu-230.

It belongs to the DXR family. Mg(2+) is required as a cofactor. It depends on Mn(2+) as a cofactor.

The enzyme catalyses 2-C-methyl-D-erythritol 4-phosphate + NADP(+) = 1-deoxy-D-xylulose 5-phosphate + NADPH + H(+). Its pathway is isoprenoid biosynthesis; isopentenyl diphosphate biosynthesis via DXP pathway; isopentenyl diphosphate from 1-deoxy-D-xylulose 5-phosphate: step 1/6. In terms of biological role, catalyzes the NADPH-dependent rearrangement and reduction of 1-deoxy-D-xylulose-5-phosphate (DXP) to 2-C-methyl-D-erythritol 4-phosphate (MEP). The chain is 1-deoxy-D-xylulose 5-phosphate reductoisomerase from Shewanella amazonensis (strain ATCC BAA-1098 / SB2B).